Here is a 538-residue protein sequence, read N- to C-terminus: Syncytin-1 (538 aa).

Residues 1–20 (MALPYHILLFTVLLPSFTLT) form the signal peptide. The Extracellular portion of the chain corresponds to 21-443 (APPPCRCMTS…NTGPWGLLSQ (423 aa)). A glycan (N-linked (GlcNAc...) asparagine) is linked at N169. Residues 186-189 (CWIC) carry the CXXC motif. Disulfide bonds link C186–C189, C186–C405, and C397–C404. N-linked (GlcNAc...) asparagine glycans are attached at residues N208, N214, N234, and N281. Residues 320–340 (ILPFVIGAGVLGALGTGIGGI) form a fusion peptide region. The tract at residues 380-396 (LQNRRALDLLTAERGGT) is immunosuppression. The short motif at 397–405 (CLFLGEECC) is the CX6CC element. The N-linked (GlcNAc...) asparagine glycan is linked to N409. The chain crosses the membrane as a helical span at residues 444 to 464 (WMPWILPFLGPLAAIILLLLF). The segment at 465 to 484 (GPCIFNLLVNFVSSRIEAVK) is essential for the fusiogenic function. The Cytoplasmic portion of the chain corresponds to 465-538 (GPCIFNLLVN…LLRPNSAGSS (74 aa)). The disordered stretch occupies residues 496–538 (KIYRRPLDRPASPRSDVNDIKCTPPEEISTAQPLLRPNSAGSS).

This sequence belongs to the gamma type-C retroviral envelope protein family. HERV class-I W env subfamily. As to quaternary structure, the mature envelope protein (Env) consists of a trimer of SU-TM heterodimers attached probably by a labile interchain disulfide bond. Interacts with the C-type lectin CD209/DC-SIGN. In terms of processing, specific enzymatic cleavages in vivo yield mature proteins. Envelope glycoproteins are synthesized as an inactive precursor that is heavily N-glycosylated and processed likely by furin in the Golgi to yield the mature SU and TM proteins. The cleavage site between SU and TM requires the minimal sequence [KR]-X-[KR]-R. Post-translationally, the CXXC motif is highly conserved across a broad range of retroviral envelope proteins. It is thought to participate in the formation of a labile disulfide bond possibly with the CX6CC motif present in the transmembrane protein.

It is found in the cell membrane. The protein resides in the virion. This endogenous retroviral envelope protein has retained its original fusogenic properties and participates in trophoblast fusion and the formation of a syncytium during placenta morphogenesis. May recognize and induce fusion through binding of SLC1A4 and SLC1A5. Functionally, endogenous envelope proteins may have kept, lost or modified their original function during evolution. Retroviral envelope proteins mediate receptor recognition and membrane fusion during early infection. The surface protein (SU) mediates receptor recognition, while the transmembrane protein (TM) acts as a class I viral fusion protein. The protein may have at least 3 conformational states: pre-fusion native state, pre-hairpin intermediate state, and post-fusion hairpin state. During viral and target cell membrane fusion, the coiled coil regions (heptad repeats) assume a trimer-of-hairpins structure, positioning the fusion peptide in close proximity to the C-terminal region of the ectodomain. The formation of this structure appears to drive apposition and subsequent fusion of membranes. The polypeptide is Syncytin-1 (ERVW-1) (Gorilla gorilla gorilla (Western lowland gorilla)).